Reading from the N-terminus, the 208-residue chain is Protein-L-isoaspartate O-methyltransferase (208 aa).

Ser59 is an active-site residue.

The protein belongs to the methyltransferase superfamily. L-isoaspartyl/D-aspartyl protein methyltransferase family.

It is found in the cytoplasm. It catalyses the reaction [protein]-L-isoaspartate + S-adenosyl-L-methionine = [protein]-L-isoaspartate alpha-methyl ester + S-adenosyl-L-homocysteine. Functionally, catalyzes the methyl esterification of L-isoaspartyl residues in peptides and proteins that result from spontaneous decomposition of normal L-aspartyl and L-asparaginyl residues. It plays a role in the repair and/or degradation of damaged proteins. This Aliivibrio fischeri (strain MJ11) (Vibrio fischeri) protein is Protein-L-isoaspartate O-methyltransferase.